We begin with the raw amino-acid sequence, 316 residues long: Ornithine carbamoyltransferase (316 aa).

Carbamoyl phosphate-binding positions include 59-62 (STRT), Gln-86, Arg-110, and 137-140 (HPCQ). Residues Asn-168, Asp-232, and 236–237 (SM) each bind L-ornithine. Residues 273–274 (CL) and Arg-301 each bind carbamoyl phosphate.

It belongs to the aspartate/ornithine carbamoyltransferase superfamily. OTCase family.

It localises to the cytoplasm. The enzyme catalyses carbamoyl phosphate + L-ornithine = L-citrulline + phosphate + H(+). It functions in the pathway amino-acid degradation; L-arginine degradation via ADI pathway; carbamoyl phosphate from L-arginine: step 2/2. Reversibly catalyzes the transfer of the carbamoyl group from carbamoyl phosphate (CP) to the N(epsilon) atom of ornithine (ORN) to produce L-citrulline. This Listeria monocytogenes serotype 4a (strain HCC23) protein is Ornithine carbamoyltransferase.